Consider the following 421-residue polypeptide: Ubiquitin-like modifier-activating enzyme 5 (421 aa).

ATP-binding residues include Gly-89, Asp-110, Lys-133, Asn-156, and Asn-191. Residues Cys-233 and Cys-236 each coordinate Zn(2+). The Glycyl thioester intermediate role is filled by Cys-257. Cys-310 and Cys-315 together coordinate Zn(2+).

Belongs to the ubiquitin-activating E1 family. UBA5 subfamily.

Its function is as follows. E1-like enzyme which activates UFM1. This is Ubiquitin-like modifier-activating enzyme 5 from Oryza sativa subsp. japonica (Rice).